The chain runs to 194 residues: ATP-dependent Clp protease proteolytic subunit (194 aa).

The Nucleophile role is filled by Ser-97. The active site involves His-122.

Belongs to the peptidase S14 family. Fourteen ClpP subunits assemble into 2 heptameric rings which stack back to back to give a disk-like structure with a central cavity, resembling the structure of eukaryotic proteasomes.

The protein localises to the cytoplasm. The catalysed reaction is Hydrolysis of proteins to small peptides in the presence of ATP and magnesium. alpha-casein is the usual test substrate. In the absence of ATP, only oligopeptides shorter than five residues are hydrolyzed (such as succinyl-Leu-Tyr-|-NHMec, and Leu-Tyr-Leu-|-Tyr-Trp, in which cleavage of the -Tyr-|-Leu- and -Tyr-|-Trp bonds also occurs).. In terms of biological role, cleaves peptides in various proteins in a process that requires ATP hydrolysis. Has a chymotrypsin-like activity. Plays a major role in the degradation of misfolded proteins. The polypeptide is ATP-dependent Clp protease proteolytic subunit (Campylobacter jejuni subsp. jejuni serotype O:23/36 (strain 81-176)).